A 766-amino-acid chain; its full sequence is Probable beta-glucosidase K (766 aa).

Asn-19 is a glycosylation site (N-linked (GlcNAc...) asparagine). Asp-196 is an active-site residue. N-linked (GlcNAc...) asparagine glycans are attached at residues Asn-288, Asn-453, and Asn-748. Positions 369-528 (EGQPGLGMRF…DPERAIARAV (160 aa)) constitute a PA14 domain. Positions 726-766 (LGRRGRSGSSPAVYRGRSNNVVNRTSHQGAQRISKGGFAAR) are disordered. The span at 742 to 756 (RSNNVVNRTSHQGAQ) shows a compositional bias: polar residues.

It belongs to the glycosyl hydrolase 3 family.

It is found in the secreted. It catalyses the reaction Hydrolysis of terminal, non-reducing beta-D-glucosyl residues with release of beta-D-glucose.. The protein operates within glycan metabolism; cellulose degradation. Beta-glucosidases are one of a number of cellulolytic enzymes involved in the degradation of cellulosic biomass. Catalyzes the last step releasing glucose from the inhibitory cellobiose. This chain is Probable beta-glucosidase K (bglK), found in Aspergillus fumigatus (strain CBS 144.89 / FGSC A1163 / CEA10) (Neosartorya fumigata).